A 396-amino-acid chain; its full sequence is MIISAASDYRAAAQRILPPFLFHYMDGGAYSEYTLRRNVEDLSEVALRQRILKNMSDLSLETTLFNEKLSMPVALAPVGLCGMYARRGEVQAAKAADAHGIPFTLSTVSVCPIEEVAPAIKRPMWFQLYVLRDRGFMRNALERAKAAGCSTLVFTVDMPTPGARYRDAHSGMSGPNAAMRRYLQAVTHPQWAWDVGLNGRPHDLGNISAYLGKPTGLEDYIGWLGNNFDPSISWKDLEWIRDFWDGPMVIKGILDPEDARDAVRFGADGIVVSNHGGRQLDGVLSSARALPAIADAVKGDIAILADSGIRNGLDVVRMIALGADTVLLGRAFLYALATAGQAGVANLLNLIEKEMKVAMTLTGAKSISEITQDSLVQGLGKELPAALAPMAKGNAA.

The FMN hydroxy acid dehydrogenase domain maps to 1–380 (MIISAASDYR…TQDSLVQGLG (380 aa)). A substrate-binding site is contributed by Y24. The FMN site is built by S106 and Q127. Position 129 (Y129) interacts with substrate. T155 contributes to the FMN binding site. R164 contributes to the substrate binding site. K251 provides a ligand contact to FMN. Residue H275 is the Proton acceptor of the active site. R278 serves as a coordination point for substrate. 306–330 (DSGIRNGLDVVRMIALGADTVLLGR) is a binding site for FMN.

This sequence belongs to the FMN-dependent alpha-hydroxy acid dehydrogenase family. It depends on FMN as a cofactor.

It is found in the cell inner membrane. The catalysed reaction is (S)-lactate + A = pyruvate + AH2. Catalyzes the conversion of L-lactate to pyruvate. Is coupled to the respiratory chain. The polypeptide is L-lactate dehydrogenase (Shigella boydii serotype 18 (strain CDC 3083-94 / BS512)).